A 433-amino-acid chain; its full sequence is NADH-quinone oxidoreductase subunit D (433 aa).

Belongs to the complex I 49 kDa subunit family. In terms of assembly, NDH-1 is composed of 14 different subunits. Subunits NuoB, C, D, E, F, and G constitute the peripheral sector of the complex.

It is found in the cell membrane. It catalyses the reaction a quinone + NADH + 5 H(+)(in) = a quinol + NAD(+) + 4 H(+)(out). Its function is as follows. NDH-1 shuttles electrons from NADH, via FMN and iron-sulfur (Fe-S) centers, to quinones in the respiratory chain. The immediate electron acceptor for the enzyme in this species is believed to be a menaquinone. Couples the redox reaction to proton translocation (for every two electrons transferred, four hydrogen ions are translocated across the cytoplasmic membrane), and thus conserves the redox energy in a proton gradient. In Cutibacterium acnes (strain DSM 16379 / KPA171202) (Propionibacterium acnes), this protein is NADH-quinone oxidoreductase subunit D.